Reading from the N-terminus, the 304-residue chain is MASRQPEVPPALAPSGPLSKMSLPIGMCRRAFSYDDALEDPAPMTPPPSDMGSIPWKPVIPERKYQHLDKTEEGAASVSSLAVTPSTATDSSDKAPVVKAKATHIIMNSLITKQTQESIQRFEQQAGLRDAGYTPHKGLTTEETKYLRVAEALHKLKLQSGETTREEKHPASAQSSPSSTPHSSPKQKSRGWFPSGSSTALPAPNPHSMDPGGGNDRNSADKWSLFGPRPLQKSDSGFAIQAYKGAPKPSPMEVMRAQATRAGEDPAVFKPPKMDVPVVEGKKQPPRTHNLKPRDLNVLTPTGF.

Disordered stretches follow at residues methionine 1–serine 22, leucine 38–lysine 57, aspartate 69–proline 96, glutamine 159–leucine 231, and alanine 262–phenylalanine 304. Threonine 45 carries the post-translational modification Phosphothreonine. The short motif at leucine 68–valine 78 is the Flavin-containing monooxygenase motif element. The segment covering serine 77–aspartate 90 has biased composition (polar residues). Positions alanine 171 to lysine 186 are enriched in low complexity. A phosphoserine mark is found at serine 183 and serine 184.

It belongs to the P33MONOX family. As to quaternary structure, interacts with NELFB, NOL12 and PRNP.

It localises to the cytoplasm. Functionally, potential NADPH-dependent oxidoreductase. May be involved in the regulation of neuronal survival, differentiation and axonal outgrowth. This chain is Putative monooxygenase p33MONOX (P33monox), found in Rattus norvegicus (Rat).